A 469-amino-acid polypeptide reads, in one-letter code: Cysteine--tRNA ligase (469 aa).

Cysteine 33 contacts Zn(2+). Positions 35–45 (PTVYNLLHIGN) match the 'HIGH' region motif. The Zn(2+) site is built by cysteine 214, histidine 239, and glutamate 243. The short motif at 271 to 275 (KMSKS) is the 'KMSKS' region element. An ATP-binding site is contributed by lysine 274.

Belongs to the class-I aminoacyl-tRNA synthetase family. In terms of assembly, monomer. Zn(2+) serves as cofactor.

Its subcellular location is the cytoplasm. It catalyses the reaction tRNA(Cys) + L-cysteine + ATP = L-cysteinyl-tRNA(Cys) + AMP + diphosphate. This chain is Cysteine--tRNA ligase, found in Petrotoga mobilis (strain DSM 10674 / SJ95).